The chain runs to 151 residues: C-C motif chemokine 25 (151 aa).

Positions 1–22 (MNLWLLVCLVASLMGAWSTVHT) are cleaved as a signal peptide. Intrachain disulfides connect C29–C57 and C30–C73. Positions 94–151 (THSKQHLGSRRNLQDSHLGGQRSNTGMSRLAHSKSKSSRSTRSNKKKTSFLNMANPGP) are disordered. Residues 124-141 (AHSKSKSSRSTRSNKKKT) are compositionally biased toward basic residues.

It belongs to the intercrine beta (chemokine CC) family.

It localises to the secreted. In terms of biological role, potentially involved in T-cell development. Recombinant protein shows chemotactic activity on thymocytes, macrophages, THP-1 cells, and dendritics cells but is inactive on peripheral blood lymphocytes and neutrophils. Binds to CCR9. Binds to atypical chemokine receptor ACKR4 and mediates the recruitment of beta-arrestin (ARRB1/2) to ACKR4. This Canis lupus familiaris (Dog) protein is C-C motif chemokine 25 (CCL25).